Reading from the N-terminus, the 348-residue chain is MTKKDVRILAFESSCDETSTAVIKNGREIESLIVATQIKSHQRFGGVVPEVASRHHIEVITQITKEALDKANATWDDIDAIAVTYGPGLVGALLIGVSAAKAASMATGIPLIGVDHIMGHIMAAQLKDEIEYPALALQVSGGHTEIVLMKDPIHFEIVGDTRDDAAGEAYDKIGRVLGVNYPAGKTIDEWAHKGKDTFHFPRAMMEDDDYDFSFSGLKSAFINTCHHADQIHEELDKYDLAASFQASVVDVLSHKTIRAIKEYKPKTFILGGGVAANHGLRDRLAEEIEKLPADIKPKVILPDLKLCGDNAAMIGAAAYNLYQAGKFSDVNLNADPSLELPYADSMLK.

His-116 and His-120 together coordinate Fe cation. Substrate contacts are provided by residues 138–142 (QVSGG), Asp-171, Gly-184, Asp-188, and Asn-277. Asp-309 serves as a coordination point for Fe cation.

This sequence belongs to the KAE1 / TsaD family. It depends on Fe(2+) as a cofactor.

It localises to the cytoplasm. The catalysed reaction is L-threonylcarbamoyladenylate + adenosine(37) in tRNA = N(6)-L-threonylcarbamoyladenosine(37) in tRNA + AMP + H(+). Functionally, required for the formation of a threonylcarbamoyl group on adenosine at position 37 (t(6)A37) in tRNAs that read codons beginning with adenine. Is involved in the transfer of the threonylcarbamoyl moiety of threonylcarbamoyl-AMP (TC-AMP) to the N6 group of A37, together with TsaE and TsaB. TsaD likely plays a direct catalytic role in this reaction. In Lactobacillus johnsonii (strain CNCM I-12250 / La1 / NCC 533), this protein is tRNA N6-adenosine threonylcarbamoyltransferase.